The chain runs to 147 residues: Nucleoside diphosphate kinase (147 aa).

ATP-binding residues include Lys-9, Phe-57, Arg-85, Thr-91, Arg-102, and Asn-112. His-115 functions as the Pros-phosphohistidine intermediate in the catalytic mechanism.

It belongs to the NDK family. Homotetramer. Mg(2+) serves as cofactor.

The protein localises to the cytoplasm. The enzyme catalyses a 2'-deoxyribonucleoside 5'-diphosphate + ATP = a 2'-deoxyribonucleoside 5'-triphosphate + ADP. The catalysed reaction is a ribonucleoside 5'-diphosphate + ATP = a ribonucleoside 5'-triphosphate + ADP. In terms of biological role, major role in the synthesis of nucleoside triphosphates other than ATP. The ATP gamma phosphate is transferred to the NDP beta phosphate via a ping-pong mechanism, using a phosphorylated active-site intermediate. The sequence is that of Nucleoside diphosphate kinase from Listeria monocytogenes serotype 4b (strain CLIP80459).